The chain runs to 501 residues: Probable cytochrome P450 28d2 (501 aa).

Position 446 (cysteine 446) interacts with heme.

Belongs to the cytochrome P450 family. The cofactor is heme.

It is found in the endoplasmic reticulum membrane. It localises to the microsome membrane. May be involved in the metabolism of insect hormones and in the breakdown of synthetic insecticides. This chain is Probable cytochrome P450 28d2 (Cyp28d2), found in Drosophila melanogaster (Fruit fly).